Reading from the N-terminus, the 157-residue chain is Beta-defensin 125 (157 aa).

The N-terminal stretch at 1 to 20 is a signal peptide; it reads MNILMLTFIICGLLTQVTKG. 3 cysteine pairs are disulfide-bonded: C27–C55, C35–C49, and C39–C56. The tract at residues 109–157 is disordered; sequence GETMTPETNTPETTVPPSETTTPETTMPPSETATSETMPPPSQTALTHN. Positions 110–145 are enriched in low complexity; it reads ETMTPETNTPETTVPPSETTTPETTMPPSETATSET.

It belongs to the beta-defensin family.

The protein resides in the secreted. Has antibacterial activity. This Gorilla gorilla gorilla (Western lowland gorilla) protein is Beta-defensin 125 (DEFB125).